The primary structure comprises 329 residues: MSSAQRVVITPGEPAGSGPDLVVQLAQRAWPIELVVCADGALLTERAAMLGLPLSLLPYSPDVPAAPQPAGTLTLLPVSLRAPAISGQLTVENGPYVVETLARACDGCLNGEFAALITGPVHKGVINDAGISFTGHTEFFEERSQAKKVVMMLATEELRVALATTHLPLRAIADAITPALLHEVIAILHHDLRTKFGIAEPRILVCGLNPHAGEGGHMGTEEIDTIIPVLDELRAQGMKLNGPLPADTLFQPKYLDNADAVLAMYHDQGLPVLKYQGFGRGVNITLGLPFIRTSVDHGTALELAGRGKADVGSFITALNLAIKMIVNTQ.

Histidine 136 and threonine 137 together coordinate substrate. A divalent metal cation is bound by residues histidine 166, histidine 211, and histidine 266. Residues lysine 274, asparagine 283, and arginine 292 each contribute to the substrate site.

This sequence belongs to the PdxA family. Homodimer. It depends on Zn(2+) as a cofactor. The cofactor is Mg(2+). Co(2+) serves as cofactor.

It is found in the cytoplasm. The enzyme catalyses 4-(phosphooxy)-L-threonine + NAD(+) = 3-amino-2-oxopropyl phosphate + CO2 + NADH. The protein operates within cofactor biosynthesis; pyridoxine 5'-phosphate biosynthesis; pyridoxine 5'-phosphate from D-erythrose 4-phosphate: step 4/5. Catalyzes the NAD(P)-dependent oxidation of 4-(phosphooxy)-L-threonine (HTP) into 2-amino-3-oxo-4-(phosphooxy)butyric acid which spontaneously decarboxylates to form 3-amino-2-oxopropyl phosphate (AHAP). The sequence is that of 4-hydroxythreonine-4-phosphate dehydrogenase from Salmonella typhimurium (strain LT2 / SGSC1412 / ATCC 700720).